Here is a 455-residue protein sequence, read N- to C-terminus: D-inositol 3-phosphate glycosyltransferase (455 aa).

A disordered region spans residues 1 to 25; that stretch reads MSQHVSRLGGLRGRSHGHGAFGGPY. Residue histidine 45 coordinates 1D-myo-inositol 3-phosphate. Residues 51-52 and glycine 59 contribute to the UDP-N-acetyl-alpha-D-glucosamine site; that span reads QP. 1D-myo-inositol 3-phosphate contacts are provided by residues 56 to 61, lysine 114, tyrosine 147, threonine 171, and arginine 191; that span reads DAGGMN. Arginine 266 and lysine 271 together coordinate UDP-N-acetyl-alpha-D-glucosamine. The Mg(2+) site is built by tyrosine 341, arginine 342, and alanine 344. Positions 354 and 362 each coordinate UDP-N-acetyl-alpha-D-glucosamine. Threonine 368 is a Mg(2+) binding site.

This sequence belongs to the glycosyltransferase group 1 family. MshA subfamily. As to quaternary structure, homodimer.

The enzyme catalyses 1D-myo-inositol 3-phosphate + UDP-N-acetyl-alpha-D-glucosamine = 1D-myo-inositol 2-acetamido-2-deoxy-alpha-D-glucopyranoside 3-phosphate + UDP + H(+). Catalyzes the transfer of a N-acetyl-glucosamine moiety to 1D-myo-inositol 3-phosphate to produce 1D-myo-inositol 2-acetamido-2-deoxy-glucopyranoside 3-phosphate in the mycothiol biosynthesis pathway. The protein is D-inositol 3-phosphate glycosyltransferase of Streptomyces bingchenggensis (strain BCW-1).